Consider the following 152-residue polypeptide: Natriuretic peptides A (152 aa).

An N-terminal signal peptide occupies residues 1–24 (MGSSAITTSFLLFVAFQLPGQTGA). 2 propeptides span residues 25 to 122 (NPVY…TAPR) and 92 to 102 (EMGAPSDGDPG). The segment at 50 to 108 (MPLEDEAVPSQVLSEQNEEAGAPLSPLSEVPPWDGGRSTQPREMGAPSDGDPGNPPRSV) is disordered. Phosphoserine is present on Ser-128. A disulfide bridge links Cys-129 with Cys-145. An important for degradation of atrial natriuretic peptide by IDE region spans residues 146–150 (NSFRY).

The protein belongs to the natriuretic peptide family. As to quaternary structure, homodimer; disulfide-linked antiparallel dimer. Post-translationally, the precursor molecule is proteolytically cleaved by CORIN at Arg-122 to produce the atrial natriuretic peptide. Undergoes further proteolytic cleavage by unknown proteases to give rise to long-acting natriuretic peptide, vessel dilator and kaliuretic peptide. Additional processing gives rise to the auriculin and atriopeptin peptides. In the kidneys, alternative processing by an unknown protease results in the peptide urodilatin. In terms of processing, cleavage by MME initiates degradation of the factor and thereby regulates its activity. Degradation by IDE results in reduced activation of NPR1 (in vitro). During IDE degradation, the resulting products can temporarily stimulate NPR2 to produce cGMP, before the fragments are completely degraded and inactivated by IDE (in vitro). Degraded by IDE. Post-translationally, phosphorylation on Ser-128 decreases vasorelaxant activity.

The protein resides in the secreted. Its subcellular location is the perikaryon. The protein localises to the cell projection. In terms of biological role, hormone that plays a key role in mediating cardio-renal homeostasis, and is involved in vascular remodeling and regulating energy metabolism. Acts by specifically binding and stimulating NPR1 to produce cGMP, which in turn activates effector proteins, such as PRKG1, that drive various biological responses. Regulates vasodilation, natriuresis, diuresis and aldosterone synthesis and is therefore essential for regulating blood pressure, controlling the extracellular fluid volume and maintaining the fluid-electrolyte balance. Also involved in inhibiting cardiac remodeling and cardiac hypertrophy by inducing cardiomyocyte apoptosis and attenuating the growth of cardiomyocytes and fibroblasts. Plays a role in female pregnancy by promoting trophoblast invasion and spiral artery remodeling in uterus, and thus prevents pregnancy-induced hypertension. In adipose tissue, acts in various cGMP- and PKG-dependent pathways to regulate lipid metabolism and energy homeostasis. This includes up-regulating lipid metabolism and mitochondrial oxygen utilization by activating the AMP-activated protein kinase (AMPK), and increasing energy expenditure by acting via MAPK11 to promote the UCP1-dependent thermogenesis of brown adipose tissue. Binds the clearance receptor NPR3 which removes the hormone from circulation. Its function is as follows. May have a role in cardio-renal homeostasis through regulation of natriuresis, diuresis, vasodilation, and inhibiting aldosterone synthesis. In vitro, promotes the production of cGMP and induces vasodilation. May promote natriuresis, at least in part, by enhancing prostaglandin E2 synthesis resulting in the inhibition of renal Na+-K+-ATPase. However reports on the involvement of this peptide in mammal blood volume and blood pressure homeostasis are conflicting; according to a report, in vivo it is not sufficient to activate cGMP and does not inhibit collecting duct transport nor effect diuresis and natriuresis. Appears to bind to specific receptors that are distinct from the receptors bound by atrial natriuretic peptide and vessel dilator. Possibly enhances protein excretion in urine by decreasing proximal tubular protein reabsorption. Functionally, may have a role in cardio-renal homeostasis through regulation of natriuresis, diuresis, and vasodilation. In vitro, promotes the production of cGMP and induces vasodilation. May promote natriuresis, at least in part, by enhancing prostaglandin E2 synthesis resulting in the inhibition of renal Na+-K+-ATPase. However reports on the involvement of this peptide in mammal blood volume and blood pressure homeostasis are conflicting; according to a report it is not sufficient to activate cGMP and does not inhibit collecting duct transport nor effect diuresis and natriuresis. Appears to bind to specific receptors that are distinct from the receptors bound by the atrial natriuretic and long-acting natriuretic peptides. Possibly functions in protein excretion in urine by maintaining the integrity of the proximal tubules and enhancing protein excretion by decreasing proximal tubular protein reabsorption. May have a role in cardio-renal homeostasis through regulation of diuresis and inhibiting aldosterone synthesis. In vitro, promotes the production of cGMP and induces vasodilation. May promote natriuresis, at least in part, by enhancing prostaglandin E2 synthesis resulting in the inhibition of renal Na+-K+-ATPase. May have a role in potassium excretion but not sodium excretion (natriuresis). Possibly enhances protein excretion in urine by decreasing proximal tubular protein reabsorption. In terms of biological role, hormone produced in the kidneys that appears to be important for maintaining cardio-renal homeostasis. Mediates vasodilation, natriuresis and diuresis primarily in the renal system, in order to maintain the extracellular fluid volume and control the fluid-electrolyte balance. Specifically binds and stimulates cGMP production by renal transmembrane receptors, likely NPR1. Urodilatin not ANP, may be the natriuretic peptide responsible for the regulation of sodium and water homeostasis in the kidney. Its function is as follows. May have a role in cardio-renal homeostasis through regulation of natriuresis and vasodilation. In vivo promotes natriuresis and in vitro, vasodilates renal artery strips. Functionally, may have a role in cardio-renal homeostasis through regulation of regulation of natriuresis and vasodilation. In vivo promotes natriuresis. In vitro, vasodilates intestinal smooth muscle but not smooth muscle strips. May have a role in cardio-renal homeostasis through regulation of natriuresis and vasodilation. In vivo promotes natriuresis. In vitro, selectively vasodilates intestinal and vascular smooth muscle strips. In terms of biological role, may have a role in cardio-renal homeostasis through regulation of natriuresis and vasodilation. In vivo promotes natriuresis. In vitro, selectively vasodilates intestinal smooth muscle but not vascular smooth muscle strips. This Ovis aries (Sheep) protein is Natriuretic peptides A (NPPA).